Here is a 408-residue protein sequence, read N- to C-terminus: MNFNFSRFQYISNIFFILIISFPGGLIYLLTGSTLSFWLRESGFDKITIGLFSLVNFIHIFKFLWGPLLEKVSFAPLSKRGYKYCLIIALVSCICCVYILTNFNPNTHFIPFALCLVAVAFFSSIYDMLLQSSQMLLITNKNWGISEAACTTGFRIGILIAGSGALYLSTIISWQDVYRSMAILCIPSLLLIIIYPLKFKDKTIINDFDRFWYAFYDFIKKPKWLIIVSFMLLYRLQDNFLSIMPNMFYLDIGYTKKDLALGYKAFGMCAAILGGFIGGFLCRKYEYFYLLKRALIYHALSSLSFLFLYFYNRDITSLYIAVFFQEFTKGLTMSPFFSYQLRCCSSKYCITQIALITSIAYISTILFGSISGYAATYLGWTYFFLVAGFCFIPAYILIKYLPPYVIPS.

Transmembrane regions (helical) follow at residues Y10–L30, I49–L69, Y84–N104, F109–L129, F154–W174, V177–L197, W224–M244, L261–L281, A294–Y311, I315–F337, I353–Y373, and L378–I398.

The protein belongs to the major facilitator superfamily.

It localises to the cell inner membrane. The polypeptide is Putative transporter AmpG 2 (ampG2) (Rickettsia felis (strain ATCC VR-1525 / URRWXCal2) (Rickettsia azadi)).